A 430-amino-acid chain; its full sequence is Serine carboxypeptidase-like 13 (430 aa).

The N-terminal stretch at 1–22 (MSLTLEFLLLLIVLILSHHAHS) is a signal peptide. Disulfide bonds link C81–C319, C240–C254, and C278–C285. N102 carries N-linked (GlcNAc...) asparagine glycosylation. The active site involves S177. N-linked (GlcNAc...) asparagine glycans are attached at residues N299 and N323. Residue D355 is part of the active site. The N-linked (GlcNAc...) asparagine glycan is linked to N371. The active site involves H408.

It belongs to the peptidase S10 family. Expression not detected.

It is found in the secreted. It carries out the reaction 2 1-O-(trans-sinapoyl)-beta-D-glucose = 1,2-di-O-sinapoyl beta-D-glucose + D-glucose. Its function is as follows. Catalyzes the formation of 1,2-bis-O-sinapoyl beta-D-glucoside. This Arabidopsis thaliana (Mouse-ear cress) protein is Serine carboxypeptidase-like 13 (SCPL13).